The chain runs to 248 residues: MKILISPSKTQNKNIDSFSNNEENILFTNKTNELNDLLIKSINNEKFNSWLELKNNSLIEETIKDIKEFKNNKAYKAIEFYDGLQFKNILYSQLSETQKTKLNESLIIISGFYGIVFPNSYIKPYRLMLGSKINIPNYKNLYDFWFKEFNQKLEELNPDKLIINLASGEYSKLIDNSIFNVINVDFKLFKSNKYVSLSTFSKQCRGYFINQFLNINLDINKIKDLDILGFKFNNELSYKNNYIFTKAY.

It belongs to the UPF0246 family.

This is UPF0246 protein MYPE6270 from Malacoplasma penetrans (strain HF-2) (Mycoplasma penetrans).